Reading from the N-terminus, the 332-residue chain is Casein kinase II subunit alpha (332 aa).

The Protein kinase domain occupies 34-319 (YEVVRKVGRG…ALEAMTHPYF (286 aa)). ATP is bound by residues 40 to 48 (VGRGKYSEV) and Lys63. The active-site Proton acceptor is Asp151.

The protein belongs to the protein kinase superfamily. Ser/Thr protein kinase family. CK2 subfamily. In terms of assembly, tetramer of two alpha and two beta chains (possible).

The enzyme catalyses L-seryl-[protein] + ATP = O-phospho-L-seryl-[protein] + ADP + H(+). It carries out the reaction L-threonyl-[protein] + ATP = O-phospho-L-threonyl-[protein] + ADP + H(+). In terms of biological role, casein kinases are operationally defined by their preferential utilization of acidic proteins such as caseins as substrates. The alpha chain contains the catalytic site. The polypeptide is Casein kinase II subunit alpha (ACK2) (Zea mays (Maize)).